We begin with the raw amino-acid sequence, 1245 residues long: Prospore membrane adapter protein SPO71 (1245 aa).

The disordered stretch occupies residues 207–270 (LHEEDQENTN…DFNYNREPSE (64 aa)). The span at 227–247 (KRKDLGESKSISRKDYSHFDR) shows a compositional bias: basic and acidic residues. The PxP motif lies at 385–399 (INILPPWPTELTEEE). The 200-residue stretch at 1030–1229 (LIQKGPLYQK…WVMSIYYELE (200 aa)) folds into the PH domain. The segment at 1154 to 1192 (KKGNEKQYTQDYGRQDNNIDPPSAPEADLNNSNVPSNTD) is disordered. 2 stretches are compositionally biased toward polar residues: residues 1159–1173 (KQYT…NNID) and 1182–1191 (LNNSNVPSNT).

The protein belongs to the SPO71 family. Interacts (via PxP motif) with VPS13 (via SHR-BD domain); during prospore membrane formation.

The protein resides in the prospore membrane. Its function is as follows. Recruits the lipid transfer protein VPS13 to the prospore membrane during sporulation, thereby aiding prospore membrane formation. This chain is Prospore membrane adapter protein SPO71 (SPO71), found in Saccharomyces cerevisiae (strain ATCC 204508 / S288c) (Baker's yeast).